Here is a 216-residue protein sequence, read N- to C-terminus: Uracil phosphoribosyltransferase (216 aa).

5-phospho-alpha-D-ribose 1-diphosphate is bound by residues arginine 85, arginine 110, and 135-143 (DPMVATGYS). Residues isoleucine 200 and 205–207 (GDA) each bind uracil. Aspartate 206 contacts 5-phospho-alpha-D-ribose 1-diphosphate.

The protein belongs to the UPRTase family. It depends on Mg(2+) as a cofactor.

It catalyses the reaction UMP + diphosphate = 5-phospho-alpha-D-ribose 1-diphosphate + uracil. Its pathway is pyrimidine metabolism; UMP biosynthesis via salvage pathway; UMP from uracil: step 1/1. Its activity is regulated as follows. Allosterically activated by GTP. In terms of biological role, catalyzes the conversion of uracil and 5-phospho-alpha-D-ribose 1-diphosphate (PRPP) to UMP and diphosphate. The sequence is that of Uracil phosphoribosyltransferase from Paraburkholderia phytofirmans (strain DSM 17436 / LMG 22146 / PsJN) (Burkholderia phytofirmans).